A 190-amino-acid chain; its full sequence is Elongation factor P (190 aa).

This sequence belongs to the elongation factor P family.

The protein resides in the cytoplasm. The protein operates within protein biosynthesis; polypeptide chain elongation. Functionally, involved in peptide bond synthesis. Stimulates efficient translation and peptide-bond synthesis on native or reconstituted 70S ribosomes in vitro. Probably functions indirectly by altering the affinity of the ribosome for aminoacyl-tRNA, thus increasing their reactivity as acceptors for peptidyl transferase. This Bartonella bacilliformis (strain ATCC 35685 / KC583 / Herrer 020/F12,63) protein is Elongation factor P.